A 118-amino-acid polypeptide reads, in one-letter code: Vesicle-associated membrane protein 1 (118 aa).

A compositionally biased stretch (low complexity) spans 1 to 15; that stretch reads MSAPAQPPAEGTEGA. Residues 1 to 38 form a disordered region; that stretch reads MSAPAQPPAEGTEGAAPGGGPPGPPPNTTSNRRLQQTQ. The Cytoplasmic portion of the chain corresponds to 1–96; the sequence is MSAPAQPPAE…KRKYWWKNCK (96 aa). The segment covering 28–38 has biased composition (polar residues); sequence TTSNRRLQQTQ. The 61-residue stretch at 33-93 folds into the v-SNARE coiled-coil homology domain; sequence RLQQTQAQVE…AKLKRKYWWK (61 aa). Serine 63 carries the phosphoserine modification. The helical; Anchor for type IV membrane protein transmembrane segment at 97-116 threads the bilayer; sequence MMIMLGAICAIIVVVIVIYI. At 117-118 the chain is on the vesicular side; that stretch reads FT.

This sequence belongs to the synaptobrevin family. In terms of assembly, interacts with VAPA and VAPB. (Microbial infection) Targeted and hydrolyzed by C.botulinum neurotoxin type D (BoNT/D, botD) which hydrolyzes the 61-Lys-|-Leu-62 bond and inhibits neurotransmitter release. This is a poor substrate for BoNT/D, high concentrations are required to cleave it in vitro. Post-translationally, (Microbial infection) Targeted and hydrolyzed by C.botulinum neurotoxin type F (BoNT/F, botF) which hydrolyzes the 60-Gln-|-Lys-61 bond and inhibits neurotransmitter release. In terms of tissue distribution, expressed in brain and spleen (at protein level). Isoform 1 expressed at very high level in brain. Even higher level found in spinal cord. Isoform 3 expressed in kidney, spleen and liver. Isoforms 2 and 3 expressed in osteoblasts of trabecular bone. Also expressed in heart.

The protein resides in the cytoplasmic vesicle. The protein localises to the secretory vesicle. It localises to the synaptic vesicle membrane. It is found in the synapse. Its subcellular location is the synaptosome. The protein resides in the cytoplasmic vesicle membrane. The protein localises to the mitochondrion outer membrane. Its function is as follows. Involved in the targeting and/or fusion of transport vesicles to their target membrane. The polypeptide is Vesicle-associated membrane protein 1 (Vamp1) (Rattus norvegicus (Rat)).